We begin with the raw amino-acid sequence, 200 residues long: SKP1-like protein 19 (200 aa).

Basic and acidic residues predominate over residues 67 to 92 (DDVVETHESSTKGDKTVEEAKKKPDD). The disordered stretch occupies residues 67–109 (DDVVETHESSTKGDKTVEEAKKKPDDVAVPESTEGDDEAEDKK). Residues 132–190 (ILAANYLNVQGLFDLCSKTIADYIKDMTPEEVRELFNIENDFTPEEEEAIRNENAWTFE) are interaction with the F-box domain of F-box proteins.

The protein belongs to the SKP1 family. In terms of assembly, part of a SCF (SKP1-cullin-F-box) protein ligase complex. Interacts with CPR1/CPR30. Expressed in leaves and flowers.

The protein resides in the nucleus. The protein operates within protein modification; protein ubiquitination. Functionally, involved in ubiquitination and subsequent proteasomal degradation of target proteins. Together with CUL1, RBX1 and a F-box protein, it forms a SCF E3 ubiquitin ligase complex. The functional specificity of this complex depends on the type of F-box protein. In the SCF complex, it serves as an adapter that links the F-box protein to CUL1. The protein is SKP1-like protein 19 (ASK19) of Arabidopsis thaliana (Mouse-ear cress).